We begin with the raw amino-acid sequence, 380 residues long: Acyl-coenzyme A diphosphatase NUDT19 (380 aa).

The 257-residue stretch at 8–264 (WKEAATLIVA…KIWIPPPQFY (257 aa)) folds into the Nudix hydrolase domain. A Nudix box motif is present at residues 115-136 (SLIPGEVATRICAIRETFEESG). Residues Glu130 and Glu134 each coordinate Mg(2+). Positions 378-380 (NKL) match the Microbody targeting signal motif.

The protein belongs to the Nudix hydrolase family. In terms of assembly, monomer. It depends on Mg(2+) as a cofactor. Requires Mn(2+) as cofactor.

Its subcellular location is the peroxisome. It catalyses the reaction an acyl-CoA + H2O = an acyl-4'-phosphopantetheine + adenosine 3',5'-bisphosphate + 2 H(+). The enzyme catalyses CoA + H2O = (R)-4'-phosphopantetheine + adenosine 3',5'-bisphosphate + 2 H(+). The catalysed reaction is hexanoyl-CoA + H2O = hexanoyl-4'-phosphopantetheine + adenosine 3',5'-bisphosphate + 2 H(+). It carries out the reaction octanoyl-CoA + H2O = S-octanoyl-4'-phosphopantetheine + adenosine 3',5'-bisphosphate + 2 H(+). It catalyses the reaction butanoyl-CoA + H2O = S-butanoyl-4'-phosphopantetheine + adenosine 3',5'-bisphosphate + 2 H(+). The enzyme catalyses propanoyl-CoA + H2O = propanoyl-4'-phosphopantetheine + adenosine 3',5'-bisphosphate + 2 H(+). The catalysed reaction is malonyl-CoA + H2O = malonyl-4'-phosphopantetheine + adenosine 3',5'-bisphosphate + 2 H(+). It carries out the reaction succinyl-CoA + H2O = succinyl-4'-phosphopantetheine + adenosine 3',5'-bisphosphate + 2 H(+). It catalyses the reaction choloyl-CoA + H2O = S-choloyl-4'-phosphopantetheine + adenosine 3',5'-bisphosphate + 2 H(+). The enzyme catalyses 4,8-dimethylnonanoyl-CoA + H2O = S-(4,8-dimethylnonanoyl)-4'-phosphopantetheine + adenosine 3',5'-bisphosphate + 2 H(+). The catalysed reaction is (9Z,12Z,15Z)-octadecatrienoyl-CoA + H2O = S-(9Z,12Z,15Z-octadecatrienoyl)-4'-phosphopantetheine + adenosine 3',5'-bisphosphate + 2 H(+). It carries out the reaction (9Z,12Z)-octadecadienoyl-CoA + H2O = S-(9Z,12Z-octadecadienoyl)-4'-phosphopantetheine + adenosine 3',5'-bisphosphate + 2 H(+). It catalyses the reaction (9Z)-hexadecenoyl-CoA + H2O = S-(9Z-hexadecenoyl)-4'-phosphopantetheine + adenosine 3',5'-bisphosphate + 2 H(+). The enzyme catalyses (9Z)-tetradecenoyl-CoA + H2O = S-(9Z-tetradecenoyl)-4'-phosphopantetheine + adenosine 3',5'-bisphosphate + 2 H(+). The catalysed reaction is (6Z)-octenoyl-CoA + H2O = S-(6Z-octenoyl)-4'-phosphopantetheine + adenosine 3',5'-bisphosphate + 2 H(+). It carries out the reaction hexadecanoyl-CoA + H2O = S-hexadecanoyl-4'-phosphopantetheine + adenosine 3',5'-bisphosphate + 2 H(+). It catalyses the reaction tetradecanoyl-CoA + H2O = tetradecanoyl-4'-phosphopantetheine + adenosine 3',5'-bisphosphate + 2 H(+). The enzyme catalyses dodecanoyl-CoA + H2O = S-dodecanoyl-4'-phosphopantetheine + adenosine 3',5'-bisphosphate + 2 H(+). The catalysed reaction is a 5'-end CoA-ribonucleoside in mRNA + H2O = a 5'-end phospho-adenosine-phospho-ribonucleoside in mRNA + (R)-4'-phosphopantetheine + 2 H(+). Fatty acyl-coenzyme A (CoA) diphosphatase that hydrolyzes fatty acyl-CoA to yield acyl-4'-phosphopantetheine and adenosine 3',5'-bisphosphate. Mediates the hydrolysis of a wide range of CoA esters, including choloyl-CoA and branched-chain fatty-acyl-CoA esters and at low substrate concentrations medium and long-chain fatty-acyl-CoA esters are the primary substrates. Highest activity seen with medium-chain acyl-CoA esters and higher rates of activity seen with the unsaturated acyl-CoA esters compared with the saturated esters. Exhibits decapping activity towards dpCoA-capped RNAs in vitro. This is Acyl-coenzyme A diphosphatase NUDT19 (nudt19) from Xenopus laevis (African clawed frog).